The chain runs to 335 residues: 3-hydroxyisobutyrate dehydrogenase, mitochondrial (335 aa).

Residues Met1–Met35 constitute a mitochondrion transit peptide. Residue Thr39–Asp68 participates in NAD(+) binding. 3 positions are modified to N6-acetyllysine; alternate: Lys59, Lys75, and Lys78. Lys59, Lys75, and Lys78 each carry N6-succinyllysine; alternate. Lys94 bears the N6-succinyllysine mark. NAD(+) is bound by residues Leu102–Pro103 and Asn107. Residue Lys120 is modified to N6-acetyllysine. Thr133 serves as a coordination point for NAD(+). An N6-succinyllysine modification is found at Lys140. Lys144 is modified (N6-acetyllysine). Position 148 is an N6-acetyllysine; alternate (Lys148). N6-succinyllysine; alternate is present on Lys148. Residue Lys208 is part of the active site. 2 positions are modified to N6-acetyllysine; alternate: Lys237 and Lys241. N6-succinyllysine; alternate is present on residues Lys237 and Lys241. Lys283 lines the NAD(+) pocket. N6-succinyllysine is present on Lys296. N6-acetyllysine; alternate is present on Lys320. Lys320 is subject to N6-succinyllysine; alternate.

It belongs to the HIBADH-related family. 3-hydroxyisobutyrate dehydrogenase subfamily. In terms of assembly, homodimer.

The protein localises to the mitochondrion. It catalyses the reaction 3-hydroxy-2-methylpropanoate + NAD(+) = 2-methyl-3-oxopropanoate + NADH + H(+). It participates in amino-acid degradation; L-valine degradation. This is 3-hydroxyisobutyrate dehydrogenase, mitochondrial (Hibadh) from Mus musculus (Mouse).